We begin with the raw amino-acid sequence, 410 residues long: Adenosylhomocysteinase (410 aa).

2 residues coordinate substrate: aspartate 117 and glutamate 142. 143–145 (TTT) serves as a coordination point for NAD(+). Positions 172 and 176 each coordinate substrate. NAD(+) contacts are provided by residues asparagine 177, 206–211 (GYGYCG), glutamate 229, 285–287 (AGH), and asparagine 332.

Belongs to the adenosylhomocysteinase family. The cofactor is NAD(+).

The protein localises to the cytoplasm. It catalyses the reaction S-adenosyl-L-homocysteine + H2O = L-homocysteine + adenosine. It functions in the pathway amino-acid biosynthesis; L-homocysteine biosynthesis; L-homocysteine from S-adenosyl-L-homocysteine: step 1/1. Functionally, may play a key role in the regulation of the intracellular concentration of adenosylhomocysteine. This is Adenosylhomocysteinase from Thermoplasma volcanium (strain ATCC 51530 / DSM 4299 / JCM 9571 / NBRC 15438 / GSS1).